Reading from the N-terminus, the 72-residue chain is BBSome-interacting protein 1 (72 aa).

Belongs to the BBIP10 family.

It localises to the cell projection. Its subcellular location is the cilium. It is found in the cytoplasm. Functionally, required for primary cilia assembly. The protein is BBSome-interacting protein 1 (bbip1) of Danio rerio (Zebrafish).